A 135-amino-acid polypeptide reads, in one-letter code: HTH-type transcriptional repressor RghR (135 aa).

The HTH cro/C1-type domain occupies 8 to 63 (LRALREERKLTVNQLATYSGVSAAGISRIENGKRGVPKPATIKKLAEALKIPYEGL). The H-T-H motif DNA-binding region spans 19–38 (VNQLATYSGVSAAGISRIEN).

Its function is as follows. Represses the expression of yvaM and both rapG and rapH. Binds directly to the promoter regions of yvaM, rapG and rapH. The sequence is that of HTH-type transcriptional repressor RghR (rghR) from Bacillus subtilis (strain 168).